The chain runs to 348 residues: Alanine racemase (348 aa).

Lys34 serves as the catalytic Proton acceptor; specific for D-alanine. Lys34 bears the N6-(pyridoxal phosphate)lysine mark. Substrate is bound at residue Arg127. The Proton acceptor; specific for L-alanine role is filled by Tyr243. Residue Met291 coordinates substrate.

It belongs to the alanine racemase family. Requires pyridoxal 5'-phosphate as cofactor.

The catalysed reaction is L-alanine = D-alanine. It functions in the pathway amino-acid biosynthesis; D-alanine biosynthesis; D-alanine from L-alanine: step 1/1. Its function is as follows. Catalyzes the interconversion of L-alanine and D-alanine. May also act on other amino acids. This chain is Alanine racemase (alr), found in Coprothermobacter proteolyticus (strain ATCC 35245 / DSM 5265 / OCM 4 / BT).